Reading from the N-terminus, the 493-residue chain is MGSSQLSTLLFFTIVVTFLTVVSSGRDLPGDYLRLPSETSRFFREPKNDDDFEGTRWAILLAGSNGYWNYRHQSDVCHAYQLLRKGGSKEENIIVFMYDDIASNEENPRPGVIINKPDGDDVYAGVPKDYTGAEVHADNFYAALLGNKSALTGGSGKVVDSGPNDHIFVYYTDHGGPGVLGMPVGPYLYASDLNEVLKKKHASGTYKSLVFYLEACESGSIFEGLLPDDLNIYATTASNAEESSWGYYCPGDKPPPPPEYSTCLGDLYSIAWMEDSEVHNLQTESLQQQYKLVKNRTISEPYGSHVMEYGDIGLSKNDLYQYLGTNPANDNNSFVDETENSLKLRTPSAAVNQRDADLIHFWEKFRKAPEGSSQKNEAEKQVLEAMSHRKHIDNSVKLIGQLLFGIEKGTELLDVVRPAGSPLVDNWDCLKTMVKTFETHCGSLSQYGMKHMRSFANICNAGIPNEPMAEASAQACASIPANPWSSLQGGFSA.

An N-terminal signal peptide occupies residues 1–19 (MGSSQLSTLLFFTIVVTFL). An N-linked (GlcNAc...) asparagine glycan is attached at N147. The active site involves H174. C216 acts as the Nucleophile in catalysis. C249 and C263 are joined by a disulfide. N295 and N331 each carry an N-linked (GlcNAc...) asparagine glycan. 2 cysteine pairs are disulfide-bonded: C429/C459 and C441/C476.

It belongs to the peptidase C13 family.

Asparagine-specific endopeptidase involved in the processing of vacuolar seed protein precursors into the mature forms. The chain is Vacuolar-processing enzyme from Vicia sativa (Spring vetch).